The sequence spans 906 residues: Protein transport protein SEC24-2 (906 aa).

Residues Cys-222, Cys-225, Cys-244, and Cys-247 each coordinate Zn(2+). Residues 222–247 (CRRCRSYMNPFVTFIEQGRRWRCNFC) are zinc finger-like.

The protein belongs to the SEC23/SEC24 family. SEC24 subfamily. In terms of assembly, the COPII coat is composed of at least 5 proteins: the SEC23/24 complex, the SEC13/31 complex, and the protein SAR1. Golgi apparatus membrane; Peripheral membrane protein; Cytoplasmic side.

It localises to the cytoplasm. Its subcellular location is the cytoplasmic vesicle. It is found in the COPII-coated vesicle membrane. The protein resides in the endoplasmic reticulum membrane. The protein localises to the golgi apparatus membrane. Its function is as follows. Component of the coat protein complex II (COPII) which promotes the formation of transport vesicles from the endoplasmic reticulum (ER). The coat has two main functions, the physical deformation of the endoplasmic reticulum membrane into vesicles and the selection of cargo molecules. The sequence is that of Protein transport protein SEC24-2 (SEC242) from Candida glabrata (strain ATCC 2001 / BCRC 20586 / JCM 3761 / NBRC 0622 / NRRL Y-65 / CBS 138) (Yeast).